Here is a 704-residue protein sequence, read N- to C-terminus: Elongation factor G 1 (704 aa).

Residues 8–291 enclose the tr-type G domain; the sequence is ERYRNIGISA…AVIDYLPSPA (284 aa). GTP is bound by residues 17–24, 88–92, and 142–145; these read AHIDAGKT, DTPGH, and NKMD.

The protein belongs to the TRAFAC class translation factor GTPase superfamily. Classic translation factor GTPase family. EF-G/EF-2 subfamily.

The protein localises to the cytoplasm. In terms of biological role, catalyzes the GTP-dependent ribosomal translocation step during translation elongation. During this step, the ribosome changes from the pre-translocational (PRE) to the post-translocational (POST) state as the newly formed A-site-bound peptidyl-tRNA and P-site-bound deacylated tRNA move to the P and E sites, respectively. Catalyzes the coordinated movement of the two tRNA molecules, the mRNA and conformational changes in the ribosome. This is Elongation factor G 1 from Burkholderia thailandensis (strain ATCC 700388 / DSM 13276 / CCUG 48851 / CIP 106301 / E264).